A 352-amino-acid chain; its full sequence is Small ribosomal subunit biogenesis GTPase RsgA (352 aa).

The span at 1-11 (MTKRKLSKGQQ) shows a compositional bias: basic residues. Residues 1 to 35 (MTKRKLSKGQQRRVQENHKKRLQSKEKKNHVELDD) are disordered. Residues 13–33 (RVQENHKKRLQSKEKKNHVEL) show a composition bias toward basic and acidic residues. The CP-type G domain maps to 114–276 (YYDGIKPIAA…VIDSPGVREF (163 aa)). GTP-binding positions include 162–165 (NKVD) and 216–224 (GQSGVGKSS). Zn(2+)-binding residues include Cys300, Cys305, His307, and Cys313.

The protein belongs to the TRAFAC class YlqF/YawG GTPase family. RsgA subfamily. Monomer. Associates with 30S ribosomal subunit, binds 16S rRNA. Zn(2+) is required as a cofactor.

It localises to the cytoplasm. In terms of biological role, one of several proteins that assist in the late maturation steps of the functional core of the 30S ribosomal subunit. Helps release RbfA from mature subunits. May play a role in the assembly of ribosomal proteins into the subunit. Circularly permuted GTPase that catalyzes slow GTP hydrolysis, GTPase activity is stimulated by the 30S ribosomal subunit. The chain is Small ribosomal subunit biogenesis GTPase RsgA from Proteus mirabilis (strain HI4320).